The following is a 507-amino-acid chain: Wax ester synthase/diacylglycerol acyltransferase 5 (507 aa).

Residues 1-211 (MEIKIRRRRG…LKTSSRCYSR (211 aa)) are Cytoplasmic-facing. The Proton acceptor role is filled by histidine 161. The chain crosses the membrane as a helical span at residues 212 to 232 (FFWLVMVLWSAALLVLNTVCD). Residues 233–507 (ALEFIATALF…VVVQERTSTQ (275 aa)) are Lumenal-facing. N-linked (GlcNAc...) asparagine glycans are attached at residues asparagine 314 and asparagine 421.

This sequence in the N-terminal section; belongs to the long-chain O-acyltransferase family. As to expression, mostly expressed in flowers and siliques.

It is found in the cell membrane. It localises to the endoplasmic reticulum membrane. The enzyme catalyses a long chain fatty alcohol + a fatty acyl-CoA = a wax ester + CoA. It carries out the reaction an acyl-CoA + a 1,2-diacyl-sn-glycerol = a triacyl-sn-glycerol + CoA. The protein operates within glycerolipid metabolism; triacylglycerol biosynthesis. Its pathway is lipid metabolism. In terms of biological role, bifunctional wax ester synthase/diacylglycerol acyltransferase. Involved in cuticular wax biosynthesis. The sequence is that of Wax ester synthase/diacylglycerol acyltransferase 5 from Arabidopsis thaliana (Mouse-ear cress).